The following is a 67-amino-acid chain: Major cold shock protein (67 aa).

In terms of domain architecture, CSD spans 4 to 63; that stretch reads GTVKWFNAEKGFGFISTENGQDVFAHFSAIQTNGFKTLEEGQKVAFDVEEGQRGPQAVNI.

As to quaternary structure, homodimer.

The protein localises to the cytoplasm. The protein is Major cold shock protein (cspA) of Streptococcus pyogenes serotype M3 (strain ATCC BAA-595 / MGAS315).